Reading from the N-terminus, the 63-residue chain is Large ribosomal subunit protein uL29 (63 aa).

The protein belongs to the universal ribosomal protein uL29 family.

This chain is Large ribosomal subunit protein uL29, found in Enterobacter sp. (strain 638).